A 518-amino-acid polypeptide reads, in one-letter code: Glycerophosphoinositol transporter 1 (518 aa).

Residues 1-44 (MEDKDITSVNEKEVNENTNPRIIKYDAERRATRTETSKKDKWKN) lie on the Cytoplasmic side of the membrane. Residues 45–65 (IVTIIASGFALISDGYVNGSM) form a helical membrane-spanning segment. Over 66–91 (SMLNKVFVMEYGKKNYSSKVSTRVSN) the chain is Extracellular. N-linked (GlcNAc...) asparagine glycosylation is present at asparagine 80. A helical membrane pass occupies residues 92–112 (AALVGIIFGQFFMGIAADYYS). Over 113–114 (RK) the chain is Cytoplasmic. Residues 115–136 (SCILVATAILVIGSALCAASHG) traverse the membrane as a helical segment. Residues 137 to 138 (TT) lie on the Extracellular side of the membrane. The chain crosses the membrane as a helical span at residues 139-159 (VPGMFWMLTVMRGLVGIGVGA). Topologically, residues 160-184 (EYPTSTLSANESANEYTTTKRGGIL) are cytoplasmic. A helical membrane pass occupies residues 185–205 (VMVTNLPLAFGGPFATIIFLI). The Extracellular segment spans residues 206-216 (VYKICSGTKHL). A helical transmembrane segment spans residues 217–237 (EAIWRTVFAIGCFWPLSVFYF). Residues 238–268 (RWKTATTEVYEKGRIKRNIPYFLALKFYWKR) lie on the Cytoplasmic side of the membrane. A helical transmembrane segment spans residues 269 to 289 (LLGTCGTWFMYDFVTFPNGIF). Topologically, residues 290 to 306 (SSTIISSVIKDQNDLVK) are extracellular. A helical membrane pass occupies residues 307–327 (VAEWNLLLGVLAVLGVPIGAY). Residues 328 to 335 (LSDRIGRK) are Cytoplasmic-facing. The chain crosses the membrane as a helical span at residues 336-356 (YTLMFGFSGYIIFGLIIGCAY). Over 357-360 (DQLK) the chain is Extracellular. A helical membrane pass occupies residues 361–381 (KITPLFIIFYAFMNMLGNAGP). Over 382–399 (GDMLGVISSEASATAVRG) the chain is Cytoplasmic. The chain crosses the membrane as a helical span at residues 400 to 420 (VFYGLSAVTGKIGSVVGVECF). At 421-430 (QPIRDNLGAR) the chain is on the extracellular side. A helical membrane pass occupies residues 431–451 (WTFIIAAICGLIGIIITYFFV). Over 452–518 (PHSLESDLMK…IISVRQVDQS (67 aa)) the chain is Cytoplasmic.

Belongs to the major facilitator superfamily. Sugar transporter (TC 2.A.1.1) family.

The protein localises to the cell membrane. It catalyses the reaction sn-glycerol 3-phosphocholine(out) = sn-glycerol 3-phosphocholine(in). The enzyme catalyses sn-glycero-3-phospho-1D-myo-inositol(out) = sn-glycero-3-phospho-1D-myo-inositol(in). Glycerophosphodiester transporter that mediates uptake of both glycerophosphoinositol (GroPIns) and glycerophosphocholine (GroPCho) as sources of the nutrients inositol and phosphate. The sequence is that of Glycerophosphoinositol transporter 1 from Saccharomyces cerevisiae (strain ATCC 204508 / S288c) (Baker's yeast).